The following is a 50-amino-acid chain: Protease inhibitor 2 (50 aa).

Residues 2-50 (EDCVGRKACTREWYPVCGSDGVTYSNPCNFSAQQEQCDPNITIAHMGEC) enclose the Kazal-like domain. 2 disulfides stabilise this stretch: cysteine 10–cysteine 29 and cysteine 18–cysteine 50. 2 N-linked (GlcNAc...) asparagine glycosylation sites follow: asparagine 30 and asparagine 41.

Serine protease inhibitor. Strongly inhibits human neutrophil elastase and trypsin, also inhibits porcine pancreatic elastase and subtilisin A. Does not inhibit chymotrypsin, plasma kallikrein, pancreatic kallikrein, thrombin or papain. This chain is Protease inhibitor 2, found in Cenchritis muricatus (Beaded periwinkle).